The following is a 202-amino-acid chain: Homeobox protein ceh-13 (202 aa).

Disordered stretches follow at residues 60–83 (PATA…LPTG) and 166–202 (RMKE…KNFK). Positions 63-81 (ASGLSPPASRSSNSSAELP) are enriched in low complexity. The segment at residues 114–173 (NGTNRTNFTTHQLTELEKEFHTAKYVNRTRRTEIASNLKLQEAQVKIWFQNRRMKEKKRE) is a DNA-binding region (homeobox). Residues 183 to 194 (TWESNSPTSSCS) are compositionally biased toward polar residues.

It is found in the nucleus. This chain is Homeobox protein ceh-13 (ceh-13), found in Caenorhabditis elegans.